The sequence spans 663 residues: MAGDRLPRKVMDAKKLASLLRGGPGGPLVIDSRSFVEYNSCHVLSSVNICCSKLVKRRLQQGKVTIAELIQPATRSQVDATEPQDVVVYDQSTRDASVLAADSFLSILLSKLDGCFDSVAILTGGFATFSSCFPGLCEGKPATLPSMSLSQPCLPVPSVGLTRILPHLYLGSQKDVLNKDLMTQNGISYVLNASNSCPKPDFICESRFMRIPINDNYCEKLLPWLDKSIEFIDKAKLSSCQVIVHCLAGISRSATIAIAYIMKTMGMSSDDAYRFVKDRRPSISPNFNFLGQLLEYERSLKLLAALQTDGPHLGTPEPLMGPAAGIPLPRLPPSTSESAATGSEAATAAREGSPSAGGDAPIPSTAPATSALQQGLRGLHLSSDRLQDTNRLKRSFSLDIKSAYAPSRRPDFPGPPDPGEAPKLCKLDSPSGGTLGLPSPSPDSPDSVPECRPRPRRRRPPASSPARSPAHGLGLNFGDTARQTPRHGLSALSAPGLPGPGQPAGPGGWVPPLDSPGTPSPDGPWCFSPEGAQGPGAVFSAFGRVSAGAPGPGNSSSSGGGGGGGGGGGGGGGGGGSSSSNSSSSSSSSSSSSSSSSSSSDLRRRDVRTGWPEEPAADAQFKRRSCQMEFEEGMVEGRARGEELAALGKQTSFSGSVEVIEVS.

The 116-residue stretch at 23–138 (GPGGPLVIDS…FSSCFPGLCE (116 aa)) folds into the Rhodanese domain. Residues 160–302 (GLTRILPHLY…LLEYERSLKL (143 aa)) form the Tyrosine-protein phosphatase domain. The Phosphocysteine intermediate role is filled by Cys-246. 2 disordered regions span residues 313 to 367 (LGTP…STAP) and 404 to 624 (YAPS…FKRR). 3 stretches are compositionally biased toward low complexity: residues 334–353 (STSESAATGSEAATAAREGS), 427–448 (LDSPSGGTLGLPSPSPDSPDSV), and 546–557 (SAGAPGPGNSSS). Gly residues predominate over residues 558 to 577 (SGGGGGGGGGGGGGGGGGGS). Positions 578–600 (SSSNSSSSSSSSSSSSSSSSSSS) are enriched in low complexity.

The protein belongs to the protein-tyrosine phosphatase family. Non-receptor class dual specificity subfamily. As to quaternary structure, monomer. As to expression, expressed predominantly in brain and lung.

Its subcellular location is the cytoplasm. It is found in the nucleus. The enzyme catalyses O-phospho-L-tyrosyl-[protein] + H2O = L-tyrosyl-[protein] + phosphate. It catalyses the reaction O-phospho-L-seryl-[protein] + H2O = L-seryl-[protein] + phosphate. It carries out the reaction O-phospho-L-threonyl-[protein] + H2O = L-threonyl-[protein] + phosphate. Its function is as follows. Has phosphatase activity with synthetic phosphatase substrates and negatively regulates mitogen-activated protein kinase activity, presumably by catalysing their dephosphorylation. Expected to display protein phosphatase activity toward phosphotyrosine, phosphoserine and phosphothreonine residues. This chain is Dual specificity protein phosphatase 8 (Dusp8), found in Mus musculus (Mouse).